The primary structure comprises 117 residues: DNA-directed RNA polymerase subunit omega (117 aa).

Positions 96–105 are enriched in basic and acidic residues; it reads KEEAEEEAKQ. The segment at 96-117 is disordered; the sequence is KEEAEEEAKQKNSRAAKAAAAE. A compositionally biased stretch (low complexity) spans 108-117; sequence SRAAKAAAAE.

Belongs to the RNA polymerase subunit omega family. The RNAP catalytic core consists of 2 alpha, 1 beta, 1 beta' and 1 omega subunit. When a sigma factor is associated with the core the holoenzyme is formed, which can initiate transcription.

It carries out the reaction RNA(n) + a ribonucleoside 5'-triphosphate = RNA(n+1) + diphosphate. Its function is as follows. Promotes RNA polymerase assembly. Latches the N- and C-terminal regions of the beta' subunit thereby facilitating its interaction with the beta and alpha subunits. This Lactococcus lactis subsp. cremoris (strain SK11) protein is DNA-directed RNA polymerase subunit omega.